The sequence spans 57 residues: Large ribosomal subunit protein bL32 (57 aa).

Belongs to the bacterial ribosomal protein bL32 family.

The sequence is that of Large ribosomal subunit protein bL32 from Mycolicibacterium gilvum (strain PYR-GCK) (Mycobacterium gilvum (strain PYR-GCK)).